The chain runs to 96 residues: Small ribosomal subunit protein bS6 (96 aa).

The protein belongs to the bacterial ribosomal protein bS6 family.

In terms of biological role, binds together with bS18 to 16S ribosomal RNA. This Streptococcus pneumoniae serotype 2 (strain D39 / NCTC 7466) protein is Small ribosomal subunit protein bS6.